The following is a 186-amino-acid chain: ATP synthase subunit delta (186 aa).

Belongs to the ATPase delta chain family. As to quaternary structure, F-type ATPases have 2 components, F(1) - the catalytic core - and F(0) - the membrane proton channel. F(1) has five subunits: alpha(3), beta(3), gamma(1), delta(1), epsilon(1). F(0) has three main subunits: a(1), b(2) and c(10-14). The alpha and beta chains form an alternating ring which encloses part of the gamma chain. F(1) is attached to F(0) by a central stalk formed by the gamma and epsilon chains, while a peripheral stalk is formed by the delta and b chains.

It is found in the cell inner membrane. F(1)F(0) ATP synthase produces ATP from ADP in the presence of a proton or sodium gradient. F-type ATPases consist of two structural domains, F(1) containing the extramembraneous catalytic core and F(0) containing the membrane proton channel, linked together by a central stalk and a peripheral stalk. During catalysis, ATP synthesis in the catalytic domain of F(1) is coupled via a rotary mechanism of the central stalk subunits to proton translocation. Functionally, this protein is part of the stalk that links CF(0) to CF(1). It either transmits conformational changes from CF(0) to CF(1) or is implicated in proton conduction. This chain is ATP synthase subunit delta, found in Bacteroides thetaiotaomicron (strain ATCC 29148 / DSM 2079 / JCM 5827 / CCUG 10774 / NCTC 10582 / VPI-5482 / E50).